A 227-amino-acid chain; its full sequence is Testis-expressed protein 30 (227 aa).

The chain is Testis-expressed protein 30 (TEX30) from Homo sapiens (Human).